Here is a 104-residue protein sequence, read N- to C-terminus: Small ribosomal subunit protein uS10 (104 aa).

It belongs to the universal ribosomal protein uS10 family. In terms of assembly, part of the 30S ribosomal subunit.

Its function is as follows. Involved in the binding of tRNA to the ribosomes. The polypeptide is Small ribosomal subunit protein uS10 (Albidiferax ferrireducens (strain ATCC BAA-621 / DSM 15236 / T118) (Rhodoferax ferrireducens)).